A 134-amino-acid chain; its full sequence is C-C motif chemokine 21 (134 aa).

The signal sequence occupies residues 1–23 (MAQSLALSLLILVLAFGIPRTQG). Cystine bridges form between cysteine 31-cysteine 57, cysteine 32-cysteine 75, and cysteine 103-cysteine 122. The disordered stretch occupies residues 88–134 (QHLDKTPSPQKPAQGCRKDRGASKTGKKGKGSKGCKRTERSQTPKGP). Positions 98-134 (KPAQGCRKDRGASKTGKKGKGSKGCKRTERSQTPKGP) are C-terminal basic extension. Residues 112-122 (TGKKGKGSKGC) show a composition bias toward basic residues. Positions 123–134 (KRTERSQTPKGP) are enriched in basic and acidic residues.

Belongs to the intercrine beta (chemokine CC) family. Monomer. Binds to CCR7. Interacts with PDPN; relocalizes PDPN to the basolateral membrane. Interacts with TNFAIP6 (via Link domain). Interacts with GPR174. In terms of tissue distribution, highly expressed in high endothelial venules of lymph nodes, spleen and appendix. Intermediate levels found in small intestine, thyroid gland and trachea. Low level expression in thymus, bone marrow, liver, and pancreas. Also found in tonsil, fetal heart and fetal spleen.

It is found in the secreted. In terms of biological role, inhibits hemopoiesis and stimulates chemotaxis. Chemotactic in vitro for thymocytes and activated T-cells, but not for B-cells, macrophages, or neutrophils. Shows preferential activity towards naive T-cells. May play a role in mediating homing of lymphocytes to secondary lymphoid organs. Binds to atypical chemokine receptor ACKR4 and mediates the recruitment of beta-arrestin (ARRB1/2) to ACKR4. This is C-C motif chemokine 21 (CCL21) from Homo sapiens (Human).